We begin with the raw amino-acid sequence, 485 residues long: Sodium-coupled neutral amino acid symporter 1 (485 aa).

Over 1 to 74 the chain is Cytoplasmic; the sequence is MMHFKSGLEL…EYIPGTTSLG (74 aa). S6 bears the Phosphoserine mark. Position 11 is a phosphothreonine (T11). Phosphoserine is present on residues S25, S28, S49, and S52. T54 is modified (phosphothreonine). S56 bears the Phosphoserine mark. A helical membrane pass occupies residues 75-97; the sequence is MSVFNLSNAIMGSGILGLAFALA. Residues 98 to 112 are Extracellular-facing; it reads NTGILLFLILLTSVT. A helical transmembrane segment spans residues 113–133; sequence LLSIYSINLLLICSKETGCMV. The Cytoplasmic portion of the chain corresponds to 134-148; that stretch reads YEKLGEQVFGTTGKL. Residues 149-169 traverse the membrane as a helical segment; that stretch reads VIFGATSLQNTGAMLSYLFIV. Residues 170-188 lie on the Extracellular side of the membrane; sequence KNELPSAIKSLMGEEETFS. The helical transmembrane segment at 189–211 threads the bilayer; that stretch reads AWYVDGRVLVVMVTFGIILPLCL. Residues 212-216 are Cytoplasmic-facing; it reads LKNLG. Residues 217-237 form a helical membrane-spanning segment; sequence YLGYTSGFSLSCMVFFLIVVI. Residues 238–273 are Extracellular-facing; the sequence is YKKFQIPCMNGEQNSTVSANVTDACTPKYVTFNSKT. A disulfide bond links C245 and C262. Residues N251 and N257 are each glycosylated (N-linked (GlcNAc...) asparagine). The helical transmembrane segment at 274–294 threads the bilayer; the sequence is VYALPTIAFAFVCHPSVLPIY. At 295 to 310 the chain is on the cytoplasmic side; it reads SELKDRSQKKMQMVSN. Residues 311–331 form a helical membrane-spanning segment; it reads ISFFAMFVMYFLTAIFGYLTF. The Extracellular segment spans residues 332–348; it reads YEKVQSDLLHKYQSTGD. A helical transmembrane segment spans residues 349-369; that stretch reads ILILTVRLAVIVAVILTVPVL. At 370–391 the chain is on the cytoplasmic side; it reads FFTVRSSLFELAKKTKFHLCRH. Residues 392 to 412 form a helical membrane-spanning segment; that stretch reads VLVTIILLVIINLLVIFIPSM. Residues 413 to 414 are Extracellular-facing; sequence KD. The chain crosses the membrane as a helical span at residues 415 to 435; that stretch reads IFGVVGVTSANMLIFILPSSL. At 436–450 the chain is on the cytoplasmic side; sequence YLKITNQDGDKNTQR. Residues 451–471 form a helical membrane-spanning segment; the sequence is IWAALFLALGVLFSLISIPLV. Residues 472–485 are Extracellular-facing; that stretch reads IYDWACSSSNGEGH.

This sequence belongs to the amino acid/polyamine transporter 2 family. In terms of processing, N-glycosylation plays an important role in the L-glutamine transport. As to expression, specifically expressed in brain with the highest levels in cerebellum and thalamus (at protein level). Expressed in glutamatergic, GABAergic and a subset of dopaminergic neurons of the substantia nigra and cholinergic motoneurons (at protein level). Also expressed by ependymal cells lining the ventricle (at protein level). Expression is also detected in spinal cord, heart, colon and placenta.

The protein resides in the cell membrane. The catalysed reaction is L-glutamine(in) + Na(+)(in) = L-glutamine(out) + Na(+)(out). The enzyme catalyses L-alanine(in) + Na(+)(in) = L-alanine(out) + Na(+)(out). It catalyses the reaction L-asparagine(in) + Na(+)(in) = L-asparagine(out) + Na(+)(out). It carries out the reaction L-histidine(in) + Na(+)(in) = L-histidine(out) + Na(+)(out). The catalysed reaction is L-serine(in) + Na(+)(in) = L-serine(out) + Na(+)(out). The enzyme catalyses L-cysteine(in) + Na(+)(in) = L-cysteine(out) + Na(+)(out). It catalyses the reaction L-methionine(in) + Na(+)(in) = L-methionine(out) + Na(+)(out). It carries out the reaction glycine(in) + Na(+)(in) = glycine(out) + Na(+)(out). The catalysed reaction is L-threonine(in) + Na(+)(in) = L-threonine(out) + Na(+)(out). The enzyme catalyses L-proline(in) + Na(+)(in) = L-proline(out) + Na(+)(out). Its activity is regulated as follows. Inhibited by alpha-(methylamino)isobutyric acid (MeAIB). Inhibited by lithium, potassium, choline ions, N-methylglucamine. The pH dependence has an allosteric effect on the transport. Symporter that cotransports short-chain neutral amino acids and sodium ions from the extraccellular to the intracellular side of the cell membrane. The transport is elctrogenic, pH dependent and driven by the Na(+) electrochemical gradient. Participates in the astroglia-derived glutamine transport into GABAergic interneurons for neurotransmitter GABA de novo synthesis. May also contributes to amino acid transport in placental trophoblast. Regulates synaptic plasticity. The protein is Sodium-coupled neutral amino acid symporter 1 of Rattus norvegicus (Rat).